Reading from the N-terminus, the 254-residue chain is Galactitol 2-dehydrogenase (L-tagatose-forming) (254 aa).

NAD(+)-binding positions include 21–23 (SGI), D42, 66–67 (DV), Y159, K163, and 192–194 (VAT). Y159 acts as the Proton acceptor in catalysis. W254 serves as a coordination point for Mg(2+).

It belongs to the short-chain dehydrogenases/reductases (SDR) family. As to quaternary structure, homotetramer. A divalent metal cation serves as cofactor.

It catalyses the reaction galactitol + NAD(+) = keto-L-tagatose + NADH + H(+). Inhibited by the chelating agents EDTA and alpha,alpha'-dipyridyl. Inhibited by Zn(2+) and Fe(2+). Its function is as follows. Catalyzes the interconversion of galactitol to the rare sugar L-tagatose. Shows activity with a wide range of substrates, and catalyzes the oxidation of a variety of polyvalent aliphatic alcohols and polyols to the corresponding ketones and ketoses, respectively, and in the reverse reaction, it reduces ketones with high stereoselectivity yielding the corresponding S-configurated alcohols. Shows high activity with D-threitol, xylitol, 1,2-hexanediol, 1,2-pentanediol, 2-hexanol, L-erythrulose, D-ribulose and acetoin. Specific for NAD(+). This chain is Galactitol 2-dehydrogenase (L-tagatose-forming), found in Cereibacter sphaeroides (Rhodobacter sphaeroides).